We begin with the raw amino-acid sequence, 414 residues long: Isocitrate dehydrogenase [NADP] cytoplasmic (414 aa).

N-acetylserine is present on serine 2. At tyrosine 42 the chain carries Phosphotyrosine. 75–77 (TIT) serves as a coordination point for NADP(+). Substrate is bound at residue threonine 77. An N6-acetyllysine modification is found at lysine 81. Arginine 82 is an NADP(+) binding site. Residues 94-100 (SPNGTIR) and arginine 109 each bind substrate. Lysine 126 carries the post-translational modification N6-succinyllysine. The substrate site is built by arginine 132 and lysine 212. 2 positions are modified to N6-acetyllysine: lysine 224 and lysine 233. Aspartate 252 lines the Mn(2+) pocket. Lysine 260 contributes to the NADP(+) binding site. 2 residues coordinate Mn(2+): aspartate 275 and aspartate 279. 310 to 315 (GTVTRH) provides a ligand contact to NADP(+). An N6-acetyllysine modification is found at lysine 321. Asparagine 328 contacts NADP(+). The residue at position 389 (serine 389) is a Phosphoserine. Lysine 400 is subject to N6-succinyllysine.

It belongs to the isocitrate and isopropylmalate dehydrogenases family. Homodimer. Mg(2+) is required as a cofactor. Requires Mn(2+) as cofactor. Post-translationally, acetylation at Lys-374 dramatically reduces catalytic activity. In terms of tissue distribution, expressed preferentially in corneal epithelium. Constitute approximately 13% of the total soluble bovine corneal epithelial proteins.

Its subcellular location is the cytoplasm. It is found in the cytosol. It carries out the reaction D-threo-isocitrate + NADP(+) = 2-oxoglutarate + CO2 + NADPH. In terms of biological role, catalyzes the NADP(+)-dependent oxidative decarboxylation of isocitrate (D-threo-isocitrate) to 2-ketoglutarate (2-oxoglutarate), which is required by other enzymes such as the phytanoyl-CoA dioxygenase. Plays a critical role in the generation of NADPH, an important cofactor in many biosynthesis pathways. May act as a corneal epithelial crystallin and may be involved in maintaining corneal epithelial transparency. The protein is Isocitrate dehydrogenase [NADP] cytoplasmic (IDH1) of Bos taurus (Bovine).